The chain runs to 109 residues: Nucleoid-associated protein LBUL_1514 (109 aa).

Belongs to the YbaB/EbfC family. In terms of assembly, homodimer.

It localises to the cytoplasm. The protein resides in the nucleoid. Functionally, binds to DNA and alters its conformation. May be involved in regulation of gene expression, nucleoid organization and DNA protection. The chain is Nucleoid-associated protein LBUL_1514 from Lactobacillus delbrueckii subsp. bulgaricus (strain ATCC BAA-365 / Lb-18).